The chain runs to 592 residues: Membrane protein insertase YidC (592 aa).

5 consecutive transmembrane segments (helical) span residues 8–28 (LFIA…FVMG), 363–385 (ALGQ…MFPL), 430–450 (INPL…FALY), 493–513 (IWLI…GLTM), and 531–551 (IFAF…AGLV).

It belongs to the OXA1/ALB3/YidC family. Type 1 subfamily. In terms of assembly, interacts with the Sec translocase complex via SecD. Specifically interacts with transmembrane segments of nascent integral membrane proteins during membrane integration.

It is found in the cell inner membrane. In terms of biological role, required for the insertion and/or proper folding and/or complex formation of integral membrane proteins into the membrane. Involved in integration of membrane proteins that insert both dependently and independently of the Sec translocase complex, as well as at least some lipoproteins. Aids folding of multispanning membrane proteins. The sequence is that of Membrane protein insertase YidC from Maricaulis maris (strain MCS10) (Caulobacter maris).